The following is a 2550-amino-acid chain: MSSAPIPQSEPLAIIGLACKYANGIDSPEALYEQVMAARCMHGAMPSNRMDASFYYHPTSEATGTSYSKGGYFLNCDLNAFDSPFFQLSEIDVMAMDPQQKMLLENVYHALENAGIPLKNAISSPTSVFVGCSNNDHLALANSDLLLSLKGKGTGTSPSILANRVSWFYDFQGTSQTIDTACSSSLVAFHQGCMDVRAGKSAMSIISGINLIEHPGPTLYLSSLGVLSPDGKSMSFDARANGYGRGEGVGTVIVKPLQAALRDGNRIRAIVRSTGSNQDGRTPGITVPNPSAQERLIHDVYRVADLDPRRTGYVEAHGTGTQVGDPLEVQAILAALGVARDSPLYVGSVKSVLGHLEGGAGLAGLISATLAVESKMIPPVAGLQSLNPKIPQRDDLKFAREATPWPRWDVRRASINSFGFGGTNAHAVVEDVEGFFADLFGQYIPGALPAPEVDTSLETTPMLSKPLMSGNASNQSVQSWSTSRLFVISAFDEAGIQRNTSALAEYLDSKSTTADTDGEDRLLNNLCHTLNEKRTRFDWRSYHVADSIASLRESLQHSRAIRQSSAPKPIRFVFTGQGANWAGMACDMLKYPLFRRRIQEAAAYLRELGSGWDLFERMTSKAGELDEPTFAQSSCVAVQVALVDLLASWKVVPETVVGHSSGEIAAAYCAGHISRQAAWKVAFCRGKVCARRTDGQGRMLAAAMPVHQLERVVARVNKGQPTSVKIGCYNSPRNLTLTGRYDDILRLKLELDDVGALNRMLPVKVAYHSDYMQDAAPEYLSLLGEILDGGDTIHKDASIQMISSVTGQPVPAGDVQQASYWVKNLVSPVRFCTALLASMEFPGTTGKREDTLIEIGPHSTLRSAIKESFAEVPEYQSVQYGSLLKRYETNGSTILHTLGMMFCSGHEISLAAINDRRVGTRKIPMLLTGLPGYAFDHSRSVRGTSRRIEQVKFPTYNRHELLGVPVEDSNPYEQRWRNVLRPDDLPWLRMNRMKGQIHFPGVAYILMATEALQQRVARTMTIPRVRIANMSILAPLQVPDSPSGVEIQVSIYPTNVRANGATDWATFRIISYDTAEKTWVEHCVGSVRAETGPPDLCVNTALRKQCAEPVDIAQMYHGFTAAGMDFGENLRNIQAMKVSPDRTACTATITAPSIAPQAHDQYPLHPCSFESILHALLYLCEASQSPMVTNYIEEVVIVNPNDTGAREFESFARRQRTSATTWTCDVSITTNVGDQDIQIKGLDLVQLPANNDDAVDAESFYTVNWRPDVKLLASADALHNSAPVDAAQHLPTFDEHEGYQLASAIFLQEAKEYVTRTGLPPLPTHHQAFMDWMEEEYQSINNGTTPLLDKSLLDGIRADPDRRKSLLDRVARQSARGELLVRVGTRMIDILEQKIDCLEVMFGPDNLMERTYEEGLPGQIAPAVAGYLHCLAHAQTGIKILEVGAGTGSATKVMLDSLRPTEAQDGGGLVSSVSSYDFTDISAAFFEKARARFHDWADILRPKLLNIEQDPAAQGFELGSYDLVIATHVLHATADLNVSLKNIRALLKEGGDLIVIENIQPKFMCSQLPFGLLPGWWRSVEPYRKTNPLILKEHWTEELQNAGLRPRLIINDTDDGINEMSAFVASPMPKVLDGSQPCSIIYSSTYPGQQQLALEVADRLPRSCTAAVVDLADISLDHSDTVGIVLVGCQGLDLSELTSSEYDRVKFILTSFQKLLWVTCDPTDVPKSALATGLVRSTRWEREHDNVNIILLSVSLSRPTPLTISSEIVRLCENAFISCKRVPPNSEYRIEGSNGVLLTNRLFPAAGINECIGLGSRPRSRQVPLGTVDHPIKLTSIGSQQPNGFHFIEDPQAHEPLDPDEVKIRIHAAGLDEEDADQLSRLIPGHGFGDQGSGTVVEIGHGVQGIQVGDQVMALRTGPSCALQTFFRTHSATVAKIPDGIRLSDAAALPLPWVTAYHSLVTVARLDSQEKVLIHPAIGATGQAAVQVASMLGATVYATVETDAQRQTLAEYGVEESHILDSASVEKQFGTQTSTQGVDVLLNLRRDGLEFLHLSCLSPFGRLVDISGSRAFPSQVNSPSNQSYYRVNMRELSQLKPESIRQTLRTVAQLLASPTIRPVAPFRVGYSQLQRVLSEIRRGSRGPWVIQPLPNDPIPPLGSHQFDPSASYLLIGGFGGLGRSVARWMHHRGAKHFIFFSRSGASSAAARELCADLRAAGCAVSDMICDTTDAQAVAKAMAQCEASMPPIRGCLQASMVLEDSMLSNMDHTRFLGAITPKVQGTINVASALAPIKSNLDFFVMLSSSAGIVGNRGQANYAAANTFLDAFAGQLVTQGYPATSVSLGSVLSVGWVAENQHKLRIAFAFGALSEDLLLSILEYHMDPAWGAAQSIQTCHTVVGVRSARDFQRQSIPLPGFMAHPLFSPLLAIAGRSQTAEQAAEAPVSQGLREASSMEAAVEVVTRAIVHKLARIMALSVQEIDPQRSLGSYGVDSLVTVDLKAWFQREVGVSIGSGELLGEMAMTQLAQQAADASQFLPAELRGKLRKNTDIHV.

Residues 9-431 (SEPLAIIGLA…GTNAHAVVED (423 aa)) form the Ketosynthase family 3 (KS3) domain. Catalysis depends on for beta-ketoacyl synthase activity residues cysteine 182, histidine 317, and histidine 355. Positions 572-894 (FVFTGQGANW…KRYETNGSTI (323 aa)) are malonyl-CoA:ACP transacylase (MAT) domain. An N-terminal hotdog fold region spans residues 959 to 1094 (HELLGVPVED…GSVRAETGPP (136 aa)). The tract at residues 959–1252 (HELLGVPVED…DLVQLPANND (294 aa)) is dehydratase (DH) domain. A PKS/mFAS DH domain is found at 959–1253 (HELLGVPVED…LVQLPANNDD (295 aa)). Residues 1107–1253 (AEPVDIAQMY…LVQLPANNDD (147 aa)) form a C-terminal hotdog fold region. S-adenosyl-L-methionine-binding residues include isoleucine 1420 and glutamate 1442. Positions 1433–1612 (HAQTGIKILE…GLRPRLIIND (180 aa)) are methyltransferase (CMeT) domain. The tract at residues 1859 to 1919 (PDEVKIRIHA…DQVMALRTGP (61 aa)) is enoyl reductase (ER) (ER) domain. The tract at residues 2166–2345 (ASYLLIGGFG…PATSVSLGSV (180 aa)) is ketoreductase (KR) domain. Residues 2454-2531 (AAVEVVTRAI…QLAQQAADAS (78 aa)) enclose the Carrier domain. Serine 2491 carries the O-(pantetheine 4'-phosphoryl)serine modification.

Pantetheine 4'-phosphate serves as cofactor.

The catalysed reaction is 4 malonyl-CoA + acetyl-CoA + 5 NADPH + 9 H(+) = 7-methylmellein + 3 CO2 + 5 NADP(+) + 5 CoA + 4 H2O. It participates in mycotoxin biosynthesis. In terms of biological role, highly reducing polyketide synthase; part of the gene cluster that mediates the biosynthesis of ochratoxin A (OTA), a mycotoxin composed of a chlorinated type I polyketide dihydroisocoumarin moiety linked to L-phenylalanine, and demonstrated to have nephrotoxic, immunotoxic, genotoxic, neurotoxic, and teratogenic properties. OtaA catalyzes the condensation of one acetate and 4 malonate units to form the isocoumarin group. The pathway begins with the highly reducing polyketide synthase otaA that catalyzes the formation of the isocoumarin group during the initial stages of biosynthesis, starting from one acetate and 4 malonate units, to originate the characteristic pentaketide skeleton 7-methylmellein (7-MM) of the OTA molecule. The newly identified cyclase otaY might be involved in the polyketide cyclization reaction during the initial steps of the OTA biosynthesis. 7-MM is then oxidized into 7-carboxymellein (also called ochratoxin beta) by the cytochrome P450 monooxygenase otaC. The NRPS encoded by the otaB gene is involved in the linking of phenylalanine to the dihydroisocoumarin ring. The reaction catalyzed by NRPS results in the production of ochratoxin B (OTB), which is the non-chlorinated analog of OTA and which subsequently serves as the substrate of the halogenase otaD for chlorination activity to form the final molecular structure of OTA, containing a chlorine atom in the C-5 position of the molecule. This is Highly reducing polyketide synthase otaA from Aspergillus niger (strain ATCC MYA-4892 / CBS 513.88 / FGSC A1513).